A 336-amino-acid polypeptide reads, in one-letter code: Isethionate-binding periplasmic protein DctP (336 aa).

An N-terminal signal peptide occupies residues 1 to 23; sequence MKHLLKAGALVALACIVTLTAGA.

It belongs to the bacterial solute-binding protein 7 family. As to quaternary structure, the complex comprises the periplasmic solute receptor protein DctP, and the fused transmembrane protein DctMQ.

It is found in the periplasm. The catalysed reaction is 2-hydroxyethane-1-sulfonate(out) + Na(+)(out) = 2-hydroxyethane-1-sulfonate(in) + Na(+)(in). The protein operates within organosulfur degradation; alkanesulfonate degradation. Part of the tripartite ATP-independent periplasmic (TRAP) transport system DctPQM involved in the uptake of isethionate (2-hydroxyethanesulfonate), which is then catabolized by enzymes encoded by adjacent genes in the locus. The DctP subunit is the solute-binding protein. Thereby is involved in an anaerobic respiration pathway that converts the sulfonate isethionate to ammonia, acetate and sulfide. The sequence is that of Isethionate-binding periplasmic protein DctP from Oleidesulfovibrio alaskensis (strain ATCC BAA-1058 / DSM 17464 / G20) (Desulfovibrio alaskensis).